Here is a 303-residue protein sequence, read N- to C-terminus: Uridylate-specific endoribonuclease C (303 aa).

Positions 1–16 (MVYLVFLCLLPSLISG) are cleaved as a signal peptide. The region spanning 32-303 (TDAEIQSLAE…KRFVASSYPI (272 aa)) is the EndoU domain. Active-site residues include H181, H196, and K239. N287 is a glycosylation site (N-linked (GlcNAc...) asparagine).

The protein belongs to the ENDOU family. Monomer. The cofactor is Mn(2+).

It is found in the secreted. It carries out the reaction ribonucleotidyl-uridine-RNA = a 5'-end dephospho-uridine-RNA + a 3'-end 2',3'-cyclophospho-ribonucleotide-RNA. In terms of biological role, endoribonuclease that cleaves single-stranded RNAs at 5' of uridylates and releases a product with a 2',3'-cyclic phosphate at the 3'-end. This Xenopus laevis (African clawed frog) protein is Uridylate-specific endoribonuclease C (endou-c).